Reading from the N-terminus, the 162-residue chain is Endoribonuclease YbeY (162 aa).

Residues histidine 128, histidine 132, and histidine 138 each coordinate Zn(2+).

The protein belongs to the endoribonuclease YbeY family. It depends on Zn(2+) as a cofactor.

It is found in the cytoplasm. Its function is as follows. Single strand-specific metallo-endoribonuclease involved in late-stage 70S ribosome quality control and in maturation of the 3' terminus of the 16S rRNA. This is Endoribonuclease YbeY from Lactococcus lactis subsp. cremoris (strain SK11).